Reading from the N-terminus, the 285-residue chain is Sulfotransferase 2A1 (285 aa).

3'-phosphoadenylyl sulfate-binding residues include Lys44, Ser45, Gly46, Thr47, Asn48, and Trp49. Residue His99 is the Proton acceptor of the active site. Residues Arg121, Ser129, Tyr184, Ser218, Met223, Arg247, Lys248, and Gly249 each coordinate 3'-phosphoadenylyl sulfate. Ser251 is modified (phosphoserine).

It belongs to the sulfotransferase 1 family. Homodimer. As to expression, predominanly expressed in liver. Detected also in adrenal gland and in jejunum.

The protein localises to the cytoplasm. Its subcellular location is the cytosol. It catalyses the reaction an alcohol + 3'-phosphoadenylyl sulfate = an alkyl sulfate + adenosine 3',5'-bisphosphate + H(+). The enzyme catalyses 3beta-hydroxyandrost-5-en-17-one + 3'-phosphoadenylyl sulfate = dehydroepiandrosterone 3-sulfate + adenosine 3',5'-bisphosphate + H(+). It carries out the reaction taurolithocholate + 3'-phosphoadenylyl sulfate = taurolithocholate 3-sulfate + adenosine 3',5'-bisphosphate + H(+). The catalysed reaction is lithocholate + 3'-phosphoadenylyl sulfate = lithocholate sulfate + adenosine 3',5'-bisphosphate + H(+). It catalyses the reaction (24S)-hydroxycholesterol + 3'-phosphoadenylyl sulfate = (24S)-hydroxycholesterol 24-sulfate + adenosine 3',5'-bisphosphate + H(+). The enzyme catalyses (24S)-hydroxycholesterol + 3'-phosphoadenylyl sulfate = (24S)-hydroxycholesterol 3-sulfate + adenosine 3',5'-bisphosphate + H(+). It carries out the reaction (24S)-hydroxycholesterol 24-sulfate + 3'-phosphoadenylyl sulfate = (24S)-hydroxycholesterol 3,24-disulfate + adenosine 3',5'-bisphosphate + H(+). The catalysed reaction is pregnenolone + 3'-phosphoadenylyl sulfate = pregnenolone sulfate + adenosine 3',5'-bisphosphate + H(+). It catalyses the reaction androsterone + 3'-phosphoadenylyl sulfate = androsterone 3alpha-sulfate + adenosine 3',5'-bisphosphate + H(+). Its function is as follows. Sulfotransferase that utilizes 3'-phospho-5'-adenylyl sulfate (PAPS) as sulfonate donor to catalyze the sulfonation of steroids and bile acids in the liver and adrenal glands. Mediates the sulfation of a wide range of steroids and sterols, including pregnenolone, androsterone, DHEA, bile acids, cholesterol and as well many xenobiotics that contain alcohol and phenol functional groups. Sulfonation increases the water solubility of most compounds, and therefore their renal excretion, but it can also result in bioactivation to form active metabolites. Plays an important role in maintening steroid and lipid homeostasis. Plays a key role in bile acid metabolism. In addition, catalyzes the metabolic activation of potent carcinogenic polycyclic arylmethanols. In Macaca fascicularis (Crab-eating macaque), this protein is Sulfotransferase 2A1 (SULT2A1).